Consider the following 202-residue polypeptide: Nudix hydrolase 13, mitochondrial (202 aa).

The Nudix hydrolase domain occupies 18-167 (NFRLVSGCIP…WMQSALEEFL (150 aa)). Residues 65 to 86 (GGWEDDETVLEAASREAMEEAG) carry the Nudix box motif. Residues Glu-80 and Glu-84 each contribute to the Mg(2+) site.

Belongs to the Nudix hydrolase family. As to quaternary structure, monomer. It depends on Mg(2+) as a cofactor. As to expression, expressed in roots, leaves, stems and inflorescences.

The protein localises to the mitochondrion. Its activity is regulated as follows. Inhibited by fluoride. Functionally, mediates the hydrolysis of some nucleoside diphosphate derivatives. Can use diadenosine 5',5'''-P(1)P(6) hexaphosphate (Ap(6)A), diadenosine 5',5'''-P(1)P(5) pentaphosphate (Ap(5)A) and adenosine tetraphosphate (p(4)A) as substrates, but not diadenosine 5',5'''-P(1)P(4) tetraphosphate (Ap(4)A), diadenosine 5',5'''-P(1)P(3) triphosphate (Ap(3)A), deoxyribonucleoside triphosphates, ribonucleoside triphosphates, diphosphoinositol pentakisphosphate (PP-InsP(5)) and 5-phospho-alpha-D-ribosyl diphosphate (PRPP). This Arabidopsis thaliana (Mouse-ear cress) protein is Nudix hydrolase 13, mitochondrial (NUDT13).